Reading from the N-terminus, the 147-residue chain is Large ribosomal subunit protein uL13 (147 aa).

It belongs to the universal ribosomal protein uL13 family. As to quaternary structure, part of the 50S ribosomal subunit.

In terms of biological role, this protein is one of the early assembly proteins of the 50S ribosomal subunit, although it is not seen to bind rRNA by itself. It is important during the early stages of 50S assembly. The sequence is that of Large ribosomal subunit protein uL13 from Micrococcus luteus (strain ATCC 4698 / DSM 20030 / JCM 1464 / CCM 169 / CCUG 5858 / IAM 1056 / NBRC 3333 / NCIMB 9278 / NCTC 2665 / VKM Ac-2230) (Micrococcus lysodeikticus).